Reading from the N-terminus, the 342-residue chain is Tetraacyldisaccharide 4'-kinase (342 aa).

An ATP-binding site is contributed by 68-75; it reads TVGGTGKT.

The protein belongs to the LpxK family.

The enzyme catalyses a lipid A disaccharide + ATP = a lipid IVA + ADP + H(+). Its pathway is glycolipid biosynthesis; lipid IV(A) biosynthesis; lipid IV(A) from (3R)-3-hydroxytetradecanoyl-[acyl-carrier-protein] and UDP-N-acetyl-alpha-D-glucosamine: step 6/6. Functionally, transfers the gamma-phosphate of ATP to the 4'-position of a tetraacyldisaccharide 1-phosphate intermediate (termed DS-1-P) to form tetraacyldisaccharide 1,4'-bis-phosphate (lipid IVA). The protein is Tetraacyldisaccharide 4'-kinase of Burkholderia cenocepacia (strain HI2424).